We begin with the raw amino-acid sequence, 392 residues long: Phosphoglycerate kinase (392 aa).

Residues 21–23 (DLN), Arg-36, 59–62 (HLGR), Arg-113, and Arg-146 contribute to the substrate site. Residues Lys-197, Glu-319, and 345–348 (GGDT) each bind ATP.

This sequence belongs to the phosphoglycerate kinase family. Monomer.

It localises to the cytoplasm. The catalysed reaction is (2R)-3-phosphoglycerate + ATP = (2R)-3-phospho-glyceroyl phosphate + ADP. It functions in the pathway carbohydrate degradation; glycolysis; pyruvate from D-glyceraldehyde 3-phosphate: step 2/5. This Nitrosococcus oceani (strain ATCC 19707 / BCRC 17464 / JCM 30415 / NCIMB 11848 / C-107) protein is Phosphoglycerate kinase.